A 1129-amino-acid polypeptide reads, in one-letter code: Serine/threonine-protein kinase LATS1 (1129 aa).

The segment covering methionine 1–arginine 11 has biased composition (basic and acidic residues). A disordered region spans residues methionine 1–phenylalanine 71. Positions proline 19 to methionine 30 are enriched in polar residues. Over residues aspartate 46 to glutamine 64 the composition is skewed to basic and acidic residues. In terms of domain architecture, UBA spans glutamate 100 to methionine 141. 2 disordered regions span residues arginine 148–serine 216 and proline 228–arginine 276. The span at asparagine 235–tryptophan 268 shows a compositional bias: pro residues. Position 246 is a phosphothreonine (threonine 246). Serine 278 carries the phosphoserine modification. Disordered stretches follow at residues proline 292–glutamine 317, proline 363–serine 407, tryptophan 432–proline 492, and proline 513–isoleucine 630. A compositionally biased stretch (pro residues) spans tyrosine 300–proline 312. The PPxY motif 1 signature appears at proline 372–tyrosine 375. A compositionally biased stretch (polar residues) spans alanine 380–alanine 392. A compositionally biased stretch (low complexity) spans proline 433–serine 445. Residues tryptophan 453–serine 481 show a composition bias toward polar residues. Serine 463 carries the post-translational modification Phosphoserine; by NUAK1 and NUAK2. Low complexity-rich tracts occupy residues alanine 482–proline 492 and proline 520–proline 530. The interaction with YAP1 stretch occupies residues threonine 525 to glutamine 654. Residues proline 555 to tyrosine 558 carry the PPxY motif 2 motif. The segment covering proline 578–glutamine 608 has biased composition (basic and acidic residues). Phosphoserine is present on serine 612. The span at lysine 620–arginine 629 shows a compositional bias: basic and acidic residues. The residue at position 673 (serine 673) is a Phosphoserine. One can recognise a Protein kinase domain in the interval phenylalanine 704–phenylalanine 1009. Residues leucine 710–valine 718 and lysine 733 each bind ATP. Catalysis depends on aspartate 827, which acts as the Proton acceptor. A Phosphoserine; by STK3/MST2 modification is found at serine 908. One can recognise an AGC-kinase C-terminal domain in the interval lysine 1010–proline 1089. Residue threonine 1078 is modified to Phosphothreonine; by STK3/MST2. Residues glutamine 1104–valine 1129 are disordered.

Belongs to the protein kinase superfamily. AGC Ser/Thr protein kinase family. In terms of assembly, complexes with CDK1 in early mitosis. LATS1-associated CDK1 has no mitotic cyclin partner and no apparent kinase activity. Binds phosphorylated ZYX, locating this protein to the mitotic spindle and suggesting a role for actin regulatory proteins during mitosis. Binds to and colocalizes with LIMK1 at the actomyosin contractile ring during cytokinesis. Interacts (via PPxY motif 2) with YAP1 (via WW domains). Interacts with MOB1A and MOB1B. Interacts with LIMD1, WTIP and AJUBA. Interacts with ESR1, DCAF1 and DCAF13; probably recruits DCAF1 and DCAF13 to ESR1 to promote ESR1 ubiquitination and ubiquitin-mediated proteasomal degradation. Interacts with STK3/MST2; this interaction is inhibited in the presence of DLG5. Interacts with SCRIB in the presence of DLG5. Interacts with WWTR1/TAZ. Interacts with WWC1, WWC2 and WWC3 (via their WW domains). It depends on Mg(2+) as a cofactor. Post-translationally, autophosphorylated and phosphorylated during M-phase of the cell cycle. Phosphorylated by STK3/MST2 at Ser-908 and Thr-1078, which results in its activation. Phosphorylated by MAP4Ks; in parallel to STK3/MST2 and resulting to its activation. Phosphorylation at Ser-463 by NUAK1 and NUAK2 leads to decreased protein level and is required to regulate cellular senescence and cellular ploidy.

The protein resides in the cytoplasm. Its subcellular location is the cytoskeleton. It is found in the microtubule organizing center. It localises to the centrosome. The protein localises to the spindle. The protein resides in the midbody. Its subcellular location is the spindle pole body. The catalysed reaction is L-seryl-[protein] + ATP = O-phospho-L-seryl-[protein] + ADP + H(+). It carries out the reaction L-threonyl-[protein] + ATP = O-phospho-L-threonyl-[protein] + ADP + H(+). Negative regulator of YAP1 in the Hippo signaling pathway that plays a pivotal role in organ size control and tumor suppression by restricting proliferation and promoting apoptosis. The core of this pathway is composed of a kinase cascade wherein STK3/MST2 and STK4/MST1, in complex with its regulatory protein SAV1, phosphorylates and activates LATS1/2 in complex with its regulatory protein MOB1, which in turn phosphorylates and inactivates YAP1 oncoprotein and WWTR1/TAZ. Phosphorylation of YAP1 by LATS1 inhibits its translocation into the nucleus to regulate cellular genes important for cell proliferation, cell death, and cell migration. Acts as a tumor suppressor which plays a critical role in maintenance of ploidy through its actions in both mitotic progression and the G1 tetraploidy checkpoint. Negatively regulates G2/M transition by down-regulating CDK1 kinase activity. Involved in the control of p53 expression. Affects cytokinesis by regulating actin polymerization through negative modulation of LIMK1. May also play a role in endocrine function. Plays a role in mammary gland epithelial cell differentiation, both through the Hippo signaling pathway and the intracellular estrogen receptor signaling pathway by promoting the degradation of ESR1. Acts as an activator of the NLRP3 inflammasome by mediating phosphorylation of 'Ser-265' of NLRP3 following NLRP3 palmitoylation, promoting NLRP3 activation by NEK7. The polypeptide is Serine/threonine-protein kinase LATS1 (Mus musculus (Mouse)).